A 264-amino-acid chain; its full sequence is Thymidylate synthase (264 aa).

Arginine 21 is a dUMP binding site. Position 51 (histidine 51) interacts with (6R)-5,10-methylene-5,6,7,8-tetrahydrofolate. 126-127 (RR) serves as a coordination point for dUMP. Cysteine 146 functions as the Nucleophile in the catalytic mechanism. Residues 166–169 (RSCD), asparagine 177, and 207–209 (HLY) each bind dUMP. Aspartate 169 lines the (6R)-5,10-methylene-5,6,7,8-tetrahydrofolate pocket. Position 263 (serine 263) interacts with (6R)-5,10-methylene-5,6,7,8-tetrahydrofolate.

It belongs to the thymidylate synthase family. Bacterial-type ThyA subfamily. In terms of assembly, homodimer.

The protein resides in the cytoplasm. The enzyme catalyses dUMP + (6R)-5,10-methylene-5,6,7,8-tetrahydrofolate = 7,8-dihydrofolate + dTMP. It functions in the pathway pyrimidine metabolism; dTTP biosynthesis. In terms of biological role, catalyzes the reductive methylation of 2'-deoxyuridine-5'-monophosphate (dUMP) to 2'-deoxythymidine-5'-monophosphate (dTMP) while utilizing 5,10-methylenetetrahydrofolate (mTHF) as the methyl donor and reductant in the reaction, yielding dihydrofolate (DHF) as a by-product. This enzymatic reaction provides an intracellular de novo source of dTMP, an essential precursor for DNA biosynthesis. The protein is Thymidylate synthase of Buchnera aphidicola subsp. Acyrthosiphon pisum (strain 5A).